We begin with the raw amino-acid sequence, 914 residues long: Beta-mannosidase A (914 aa).

Residues 1–20 form the signal peptide; it reads MRFTATAAALVASSIPATLG. N-linked (GlcNAc...) asparagine glycans are attached at residues N39, N79, N230, N265, N299, N309, and N330. E462 acts as the Proton donor in catalysis. N-linked (GlcNAc...) asparagine glycosylation is found at N591, N614, N641, N721, N744, N773, N784, and N909.

It belongs to the glycosyl hydrolase 2 family. Beta-mannosidase A subfamily. In terms of assembly, homodimer.

It localises to the secreted. The catalysed reaction is Hydrolysis of terminal, non-reducing beta-D-mannose residues in beta-D-mannosides.. Its pathway is glycan metabolism; N-glycan degradation. In terms of biological role, exoglycosidase that cleaves the single beta-linked mannose residue from the non-reducing end of beta-mannosidic oligosaccharides of various complexity and length. Involved in the degradation of polymeric mannan and galactomannan. The protein is Beta-mannosidase A (mndA) of Aspergillus oryzae (strain ATCC 42149 / RIB 40) (Yellow koji mold).